Reading from the N-terminus, the 265-residue chain is Synaptoporin (265 aa).

The Cytoplasmic portion of the chain corresponds to M1–V4. In terms of domain architecture, MARVEL spans M1–G202. The helical transmembrane segment at I5–L25 threads the bilayer. Residues R26–F81 are Vesicular-facing. N-linked (GlcNAc...) asparagine glycosylation is found at N33 and N38. Residues F82–F102 traverse the membrane as a helical segment. Residues F103–P114 are Cytoplasmic-facing. A helical transmembrane segment spans residues L115–W135. At A136–N177 the chain is on the vesicular side. N-linked (GlcNAc...) asparagine glycosylation occurs at N177. Residues T178–F198 form a helical membrane-spanning segment. Over K199–I265 the chain is Cytoplasmic. Repeat unit 1 spans residues Y210–P214. The tract at residues Y210 to A242 is 5 X approximate repeats. 2 positions are modified to phosphoserine: S212 and S220. A disordered region spans residues S221–I265. Tandem repeats lie at residues Y222–G226, Y227–S231, Y232–G236, and Y238–A242. The span at Q224–S243 shows a compositional bias: low complexity. Over residues L244–I265 the composition is skewed to polar residues.

This sequence belongs to the synaptophysin/synaptobrevin family. Central nervous system.

The protein localises to the cytoplasmic vesicle. Its subcellular location is the secretory vesicle. It is found in the synaptic vesicle membrane. The protein resides in the synapse. It localises to the synaptosome. Functionally, intrinsic membrane protein of small synaptic vesicles. Probable vesicular channel protein. The chain is Synaptoporin (Synpr) from Rattus norvegicus (Rat).